A 258-amino-acid chain; its full sequence is Chaperone protein caf1M (258 aa).

The N-terminal stretch at 1–20 (MILNRLSTLGIITFGMLSFA) is a signal peptide. A disulfide bridge connects residues C121 and C160.

It belongs to the periplasmic pilus chaperone family.

The protein localises to the periplasm. Functionally, has a stimulatory role for the envelope antigen F1 secretion. It seems to interact with the subunit polypeptide and to prevent it from digestion by a protease. In Yersinia pestis, this protein is Chaperone protein caf1M (caf1M).